Consider the following 194-residue polypeptide: 21 kDa hemolysin (194 aa).

The signal sequence occupies residues 1 to 19 (MRTRSRSTVRPLWPPPSPA). BON domains lie at 49-118 (DDEV…RTGE) and 127-194 (IDSW…NYVQ).

Its subcellular location is the periplasm. The chain is 21 kDa hemolysin (hly) from Actinobacillus pleuropneumoniae (Haemophilus pleuropneumoniae).